The sequence spans 502 residues: Mannitol 2-dehydrogenase (502 aa).

35–46 (IVHVGVGGFHRA) provides a ligand contact to NAD(+).

The protein belongs to the mannitol dehydrogenase family. Monomer.

The catalysed reaction is D-mannitol + NAD(+) = D-fructose + NADH + H(+). Its function is as follows. Catalyzes the NAD(H)-dependent interconversion of D-fructose and D-mannitol in the mannitol metabolic pathway. This chain is Mannitol 2-dehydrogenase, found in Pyricularia oryzae (strain 70-15 / ATCC MYA-4617 / FGSC 8958) (Rice blast fungus).